Reading from the N-terminus, the 762-residue chain is Poly(A) RNA polymerase CID14 (762 aa).

The interval 1-123 (MPTGFQPAES…KKEEQKAAER (123 aa)) is disordered. Residues 50–62 (KKNKKDKKKKGSK) show a composition bias toward basic residues. 2 stretches are compositionally biased toward basic and acidic residues: residues 65–75 (QPVDEPDKKDG) and 99–123 (RKRD…AAER). Serine 189 lines the ATP pocket. Residues aspartate 200 and aspartate 202 each contribute to the Mg(2+) site. Positions 266, 291, 309, and 310 each coordinate ATP. The 58-residue stretch at 336–393 (NLGTLLIEFFELFGRNFNYNDVGISIRRGGFYFSKASRGWMKGQSFLLSIEDPQDKDN) folds into the PAP-associated domain. A disordered region spans residues 482–762 (SIPLGADPKP…LGQSSGDMSD (281 aa)). Over residues 536–549 (VEDDELESDDDSDS) the composition is skewed to acidic residues. Residues 572-581 (RTANSRSTSR) are compositionally biased toward polar residues. Lysine 610 is a binding site for ATP. Composition is skewed to acidic residues over residues 677–687 (GEEEEEIDSDE) and 697–707 (SDGDLGSEDEI). Polar residues predominate over residues 753–762 (LGQSSGDMSD).

It belongs to the DNA polymerase type-B-like family. In terms of assembly, component of the TRAMP complex. Requires Mg(2+) as cofactor. The cofactor is Mn(2+).

It is found in the nucleus. The protein resides in the nucleolus. It carries out the reaction RNA(n) + ATP = RNA(n)-3'-adenine ribonucleotide + diphosphate. In terms of biological role, required for 3' polyadenylation of the 5.8S and 25S rRNAs as a prelude to their degradation in the exosome. Involved in the nucleolar organization to ensure faithful chromosome segregation during mitosis. The chain is Poly(A) RNA polymerase CID14 from Cryptococcus neoformans var. neoformans serotype D (strain JEC21 / ATCC MYA-565) (Filobasidiella neoformans).